A 511-amino-acid polypeptide reads, in one-letter code: Maturase K (511 aa).

Belongs to the intron maturase 2 family. MatK subfamily.

The protein resides in the plastid. The protein localises to the chloroplast. Functionally, usually encoded in the trnK tRNA gene intron. Probably assists in splicing its own and other chloroplast group II introns. The polypeptide is Maturase K (Adesmia lanata).